Consider the following 130-residue polypeptide: Small ribosomal subunit protein uS9 (130 aa).

This sequence belongs to the universal ribosomal protein uS9 family.

The protein is Small ribosomal subunit protein uS9 of Streptococcus equi subsp. zooepidemicus (strain H70).